The following is a 157-amino-acid chain: Transcription elongation factor GreA (157 aa).

The protein belongs to the GreA/GreB family.

Its function is as follows. Necessary for efficient RNA polymerase transcription elongation past template-encoded arresting sites. The arresting sites in DNA have the property of trapping a certain fraction of elongating RNA polymerases that pass through, resulting in locked ternary complexes. Cleavage of the nascent transcript by cleavage factors such as GreA or GreB allows the resumption of elongation from the new 3'terminus. GreA releases sequences of 2 to 3 nucleotides. The chain is Transcription elongation factor GreA from Brucella anthropi (strain ATCC 49188 / DSM 6882 / CCUG 24695 / JCM 21032 / LMG 3331 / NBRC 15819 / NCTC 12168 / Alc 37) (Ochrobactrum anthropi).